The following is a 434-amino-acid chain: A-adding tRNA nucleotidyltransferase (434 aa).

20-23 (GAVR) serves as a coordination point for ATP. D33 and D35 together coordinate Mg(2+). ATP is bound by residues 91–92 (RD), N96, 132–141 (DPLRAWRAAR), and R177. The 113-residue stretch at 227–339 (VFEHGVEALH…ELLPDLLSLM (113 aa)) folds into the HD domain.

The protein belongs to the tRNA nucleotidyltransferase/poly(A) polymerase family. The cofactor is Mg(2+).

It carries out the reaction a tRNA with a 3' CC end + ATP = a tRNA with a 3' CCA end + diphosphate. TRNA nucleotidyltransferase involved in the synthesis of the tRNA CCA terminus. Adds the terminal adenosine residue to tRNA. In Deinococcus radiodurans (strain ATCC 13939 / DSM 20539 / JCM 16871 / CCUG 27074 / LMG 4051 / NBRC 15346 / NCIMB 9279 / VKM B-1422 / R1), this protein is A-adding tRNA nucleotidyltransferase.